The sequence spans 107 residues: CLAVATA3/ESR (CLE)-related protein 13 (107 aa).

The first 25 residues, 1 to 25, serve as a signal peptide directing secretion; sequence MATTRVSHVLGFLLWISLLIFVSIG. Asparagine 29 is a glycosylation site (N-linked (GlcNAc...) asparagine). Residues 79–107 are disordered; it reads ALPAGGSEIDPRYGVEKRLVPSGPNPLHH. Over residues 87–97 the composition is skewed to basic and acidic residues; that stretch reads IDPRYGVEKRL. Proline 99 and proline 102 each carry hydroxyproline. A glycan (O-linked (Ara...) hydroxyproline) is linked at proline 102.

Belongs to the CLV3/ESR signal peptide family. In terms of processing, the O-glycosylation (arabinosylation) of the hydroxyproline Pro-102 enhances binding affinity of the CLE13p peptide for its receptor. In terms of tissue distribution, mostly expressed in seedlings, roots, flowers, stems and apex, and, to a lower extent, in leaves and siliques.

The protein localises to the secreted. It localises to the extracellular space. Extracellular signal peptide that regulates cell fate. Represses root apical meristem maintenance. Regulates the transition of protophloem cells from proliferation to differentiation, thus impinging on postembryonic growth capacity of the root meristem; this signaling pathway requires CRN and CLV2. This Arabidopsis thaliana (Mouse-ear cress) protein is CLAVATA3/ESR (CLE)-related protein 13.